We begin with the raw amino-acid sequence, 891 residues long: Bifunctional aldehyde-alcohol dehydrogenase AdhE (891 aa).

The interval 2 to 440 (AVTNVAELNA…ENVGPKHLIN (439 aa)) is aldehyde dehydrogenase. Residues 110 to 115 (IVPTTN), glycine 195, and glycine 213 contribute to the NAD(+) site. Residue cysteine 246 is the Nucleophile of the active site. Residues glutamate 335 and leucine 419 each contribute to the NAD(+) site. The interval 441–448 (KKTVAKRA) is linker. The tract at residues 449–891 (ENMLWHKLPK…KAEKKAKKSA (443 aa)) is alcohol dehydrogenase. Residues aspartate 487, aspartate 519, 546–550 (GSPMD), 597–598 (TT), valine 610, lysine 619, and leucine 638 contribute to the NAD(+) site. Residues aspartate 653, histidine 657, histidine 723, and histidine 737 each contribute to the Fe cation site.

In the N-terminal section; belongs to the aldehyde dehydrogenase family. The protein in the C-terminal section; belongs to the iron-containing alcohol dehydrogenase family. In terms of assembly, forms long filaments, called spirosomes. The cofactor is Fe(2+).

It catalyses the reaction acetaldehyde + NAD(+) + CoA = acetyl-CoA + NADH + H(+). It carries out the reaction ethanol + NAD(+) = acetaldehyde + NADH + H(+). The catalysed reaction is a primary alcohol + NAD(+) = an aldehyde + NADH + H(+). Functionally, under fermentative conditions, catalyzes the sequential NADH-dependent reduction of acetyl-CoA to acetaldehyde and then to ethanol. Plays an important role in virulence and is critical for proper regulation of virulence gene expression. This chain is Bifunctional aldehyde-alcohol dehydrogenase AdhE, found in Escherichia coli O157:H7.